Reading from the N-terminus, the 270-residue chain is MLNVTNLSFTYPRHSQPALKKLNFSLKPNTHVAIIGHNGSGKSTLVKLLGGFLKAPKQTIFFRGQPLEEVGFRQIGILLQDPDMQLLGDTLHQELIFSLENHGVDPKQMDRVIADVLAVVELQGKQFTPLSKLSFGEKQRAVFACLLAVKPELYLLDEAFSMLDGKLASKLKRFIFKVIKEQQKTVINVTHDFNDLFLADEIIFLSKGQLLKQFSPAAIYKQLHLFHQHHFTLPFPWLLAHEVADHLHHEMKGPIEELQDVVDWICKHLK.

In terms of domain architecture, ABC transporter spans 2 to 232 (LNVTNLSFTY…LHLFHQHHFT (231 aa)). 36 to 43 (GHNGSGKS) serves as a coordination point for ATP.

The protein belongs to the ABC transporter superfamily.

In Mycoplasma pneumoniae (strain ATCC 29342 / M129 / Subtype 1) (Mycoplasmoides pneumoniae), this protein is Putative ABC transporter ATP-binding protein MG304 homolog.